The primary structure comprises 376 residues: Sulfate/thiosulfate import ATP-binding protein CysA 1 (376 aa).

Residues 3-237 (IRLTNISKKF…PNSRFVFDFL (235 aa)) form the ABC transporter domain. 35–42 (GPSGSGKT) is an ATP binding site.

Belongs to the ABC transporter superfamily. Sulfate/tungstate importer (TC 3.A.1.6) family. As to quaternary structure, the complex is composed of two ATP-binding proteins (CysA), two transmembrane proteins (CysT and CysW) and a solute-binding protein (CysP).

It is found in the cell inner membrane. It catalyses the reaction sulfate(out) + ATP + H2O = sulfate(in) + ADP + phosphate + H(+). The catalysed reaction is thiosulfate(out) + ATP + H2O = thiosulfate(in) + ADP + phosphate + H(+). In terms of biological role, part of the ABC transporter complex CysAWTP involved in sulfate/thiosulfate import. Responsible for energy coupling to the transport system. The chain is Sulfate/thiosulfate import ATP-binding protein CysA 1 from Shewanella oneidensis (strain ATCC 700550 / JCM 31522 / CIP 106686 / LMG 19005 / NCIMB 14063 / MR-1).